Here is a 223-residue protein sequence, read N- to C-terminus: DNA-directed RNA polymerase III subunit RPC7 (223 aa).

Residues 110–223 form a disordered region; it reads MMPRNKCKKA…SDDNMDEATY (114 aa). A compositionally biased stretch (basic residues) spans 114 to 125; the sequence is NKCKKAGPKPKK. A Phosphothreonine modification is found at Thr-133. The segment covering 140 to 155 has biased composition (basic and acidic residues); it reads DVLKKMEELEKRGDGE. Ser-157 is modified (phosphoserine). Basic and acidic residues predominate over residues 164–173; the sequence is KEGSKEKSKE. 2 stretches are compositionally biased toward acidic residues: residues 174 to 198 and 205 to 223; these read GDDD…EEND and EDGD…EATY.

Belongs to the eukaryotic RPC7 RNA polymerase subunit family. As to quaternary structure, component of the RNA polymerase III complex consisting of 17 subunits: a ten-subunit horseshoe-shaped catalytic core composed of POLR3A/RPC1, POLR3B/RPC2, POLR1C/RPAC1, POLR1D/RPAC2, POLR3K/RPC10, POLR2E/RPABC1, POLR2F/RPABC2, POLR2H/RPABC3, POLR2K/RPABC4 and POLR2L/RPABC5; a mobile stalk composed of two subunits POLR3H/RPC8 and CRCP/RPC9, protruding from the core and functioning primarily in transcription initiation; and additional subunits homologous to general transcription factors of the RNA polymerase II machinery, POLR3C/RPC3-POLR3F/RPC6-POLR3G/RPC7 heterotrimer required for transcription initiation and POLR3D/RPC4-POLR3E/RPC5 heterodimer involved in both transcription initiation and termination. Directly interacts with POLR3C/RPC62. Also found in a trimeric complex with POLR3C/RPC3 and POLR3GL. Barely detectable in differentiated tissues. Expressed in embryonic stem cells and in other dividing cells, such as some tumor cell lines.

The protein localises to the nucleus. Its subcellular location is the cytoplasm. In terms of biological role, DNA-dependent RNA polymerase catalyzes the transcription of DNA into RNA using the four ribonucleoside triphosphates as substrates. Specific peripheric component of RNA polymerase III (Pol III) which synthesizes small non-coding RNAs including 5S rRNA, snRNAs, tRNAs and miRNAs from at least 500 distinct genomic loci. Acts as a long tether that bridges POLR3C/RPC3-POLR3F/RPC6-POLR3G/RPC7 heterotrimer and the mobile stalk of Pol III, coordinating the dynamics of Pol III stalk and clamp modules during the transition from apo to elongation state. Pol III exists as two alternative complexes defined by the mutually exclusive incorporation of subunit POLR3G/RPC7alpha or POLR3GL/RPC7beta. POLR3G/RPC7alpha modulates Pol III transcriptome by specifically enhancing the transcription of snaR-A non-coding RNAs. At resting state, occupies the active site of apo Pol III and keeps Pol III in an autoinhibitory mode, preventing non-specific transcription. Pol III plays a key role in sensing and limiting infection by intracellular bacteria and DNA viruses. Acts as a nuclear and cytosolic DNA sensor involved in innate immune response. Can sense non-self dsDNA that serves as template for transcription into dsRNA. The non-self RNA polymerase III transcripts, such as Epstein-Barr virus-encoded RNAs (EBERs), induce type I interferon and NF-kappa-B through the RIG-I pathway. The polypeptide is DNA-directed RNA polymerase III subunit RPC7 (Homo sapiens (Human)).